The chain runs to 544 residues: Chaperonin GroEL (544 aa).

ATP-binding positions include 30 to 33 (TLGP), Lys-51, 87 to 91 (DGTTT), Gly-415, 479 to 481 (NAA), and Asp-495.

The protein belongs to the chaperonin (HSP60) family. As to quaternary structure, forms a cylinder of 14 subunits composed of two heptameric rings stacked back-to-back. Interacts with the co-chaperonin GroES.

It is found in the cytoplasm. The catalysed reaction is ATP + H2O + a folded polypeptide = ADP + phosphate + an unfolded polypeptide.. Functionally, together with its co-chaperonin GroES, plays an essential role in assisting protein folding. The GroEL-GroES system forms a nano-cage that allows encapsulation of the non-native substrate proteins and provides a physical environment optimized to promote and accelerate protein folding. In Francisella tularensis subsp. tularensis (strain WY96-3418), this protein is Chaperonin GroEL.